A 161-amino-acid chain; its full sequence is Peptidyl-prolyl cis-trans isomerase-like 3 (161 aa).

Residue Ser2 is modified to N-acetylserine. Residues 2 to 154 form the PPIase cyclophilin-type domain; sequence SVTLHTDVGD…NDVHIKDITI (153 aa). Arg61 carries the omega-N-methylarginine modification.

It belongs to the cyclophilin-type PPIase family. PPIL3 subfamily. As to quaternary structure, identified in the spliceosome C complex.

The catalysed reaction is [protein]-peptidylproline (omega=180) = [protein]-peptidylproline (omega=0). In terms of biological role, PPIases accelerate the folding of proteins. It catalyzes the cis-trans isomerization of proline imidic peptide bonds in oligopeptides. May be involved in pre-mRNA splicing. In Mus musculus (Mouse), this protein is Peptidyl-prolyl cis-trans isomerase-like 3 (Ppil3).